We begin with the raw amino-acid sequence, 480 residues long: Gasdermin-C2 (480 aa).

A triggers pyroptosis region spans residues 1–226; that stretch reads MGYSFDRASK…TCVILPSATK (226 aa).

The protein belongs to the gasdermin family. In terms of assembly, homooligomer; homooligomeric ring-shaped pore complex containing 27-28 subunits when inserted in the membrane. Post-translationally, cleavage by CASP8 relieves autoinhibition by releasing the N-terminal moiety (Gasdermin-C2, N-terminal) that initiates pyroptosis. Palmitoylated.

The protein localises to the cytoplasm. It localises to the cytosol. Its subcellular location is the cell membrane. The full-length protein before cleavage is inactive: intramolecular interactions between N- and C-terminal domains mediate autoinhibition in the absence of activation signal. The intrinsic pyroptosis-inducing activity is carried by the released N-terminal moiety (Gasdermin-C2, N-terminal) following cleavage by caspase CASP8 in response to type-2 immunity following worm infection. Functionally, this form constitutes the precursor of the pore-forming protein: upon cleavage, the released N-terminal moiety (Gasdermin-C2, N-terminal) binds to membranes and forms pores, triggering pyroptosis. Its function is as follows. Pore-forming protein that causes membrane permeabilization and pyroptosis in response to type-2 immunity. Produced by the cleavage of gasdermin-C2 in response to type-2 immunity following worm infection. After cleavage, moves to the plasma membrane where it strongly binds to membrane inner leaflet lipids. Homooligomerizes within the membrane and forms pores of 10-15 nanometers (nm) of inner diameter, triggering pyroptosis and lytic cell death in enterocytes. The sequence is that of Gasdermin-C2 from Mus musculus (Mouse).